We begin with the raw amino-acid sequence, 101 residues long: Protein S100-A3 (101 aa).

An N-acetylalanine modification is found at alanine 2. 2 EF-hand domains span residues 12-47 (IVCTFQEYAGRCGDKYKLCQAELKELLQKELATWTP) and 50-85 (FRECDYNKFMSVLDTNKDCEVDFVEYVRSLACLCLY). Lysine 28 and glutamate 33 together coordinate Ca(2+). A disulfide bond links cysteine 30 and cysteine 68. Arginine 51 carries the post-translational modification Citrulline; by PAD3. The Ca(2+) site is built by aspartate 63, asparagine 65, aspartate 67, glutamate 69, and glutamate 74. Cysteine 81 and cysteine 99 are joined by a disulfide. Zn(2+)-binding residues include cysteine 83, cysteine 86, histidine 87, and cysteine 93.

This sequence belongs to the S-100 family. Homodimer and homotetramer for the citrullinated form. More than half of the arginine residues undergo citrullination by PAD1 and PAD2. Arg-51 is specifically citrullinated by PAD3 and promotes tetramerization. As to expression, skin specific, specifically expressed at the inner endocuticle of hair fibers.

The protein localises to the cytoplasm. Functionally, binds both calcium and zinc. May be involved in calcium-dependent cuticle cell differentiation, hair shaft and hair cuticular barrier formation. In Homo sapiens (Human), this protein is Protein S100-A3 (S100A3).